Reading from the N-terminus, the 37-residue chain is MIEVFLFGIVLGLIPITLAGLFVTAYLQYRRGDQLDL.

A helical transmembrane segment spans residues 5-25 (FLFGIVLGLIPITLAGLFVTA).

The protein belongs to the PetG family. The 4 large subunits of the cytochrome b6-f complex are cytochrome b6, subunit IV (17 kDa polypeptide, PetD), cytochrome f and the Rieske protein, while the 4 small subunits are PetG, PetL, PetM and PetN. The complex functions as a dimer.

It localises to the plastid. The protein resides in the chloroplast thylakoid membrane. Its function is as follows. Component of the cytochrome b6-f complex, which mediates electron transfer between photosystem II (PSII) and photosystem I (PSI), cyclic electron flow around PSI, and state transitions. PetG is required for either the stability or assembly of the cytochrome b6-f complex. This Solanum lycopersicum (Tomato) protein is Cytochrome b6-f complex subunit 5.